Consider the following 333-residue polypeptide: Arylacetonitrilase (333 aa).

Positions 9–284 (VRVAVTQAEP…EGIIYADLEM (276 aa)) constitute a CN hydrolase domain. The Proton acceptor role is filled by glutamate 49. Lysine 129 is an active-site residue. The Nucleophile role is filled by cysteine 164.

The protein belongs to the carbon-nitrogen hydrolase superfamily. Nitrilase family.

The catalysed reaction is a nitrile + 2 H2O = a carboxylate + NH4(+). The enzyme catalyses 4-chlorophenylacetonitrile + 2 H2O = 4-chlorophenylacetate + NH4(+). Its function is as follows. Nitrilase that hydrolyzes preferentially phenylacetonitrile, (R,S)-mandelonitrile, and 3-indolylacetonitrile. This chain is Arylacetonitrilase, found in Aspergillus oryzae (strain ATCC 42149 / RIB 40) (Yellow koji mold).